The primary structure comprises 94 residues: uncharacterized protein (94 aa).

This sequence belongs to the phage portal family. HK97 subfamily.

This is an uncharacterized protein from Rickettsia conorii (strain ATCC VR-613 / Malish 7).